The following is a 343-amino-acid chain: C-X-C chemokine receptor type 6 (343 aa).

Topologically, residues M1 to V33 are extracellular. A glycan (N-linked (GlcNAc...) asparagine) is linked at N17. The chain crosses the membrane as a helical span at residues F34–Y60. The Cytoplasmic portion of the chain corresponds to H61 to V69. The helical transmembrane segment at F70 to Y90 threads the bilayer. Topologically, residues A91–K104 are extracellular. C103 and C181 are disulfide-bonded. The chain crosses the membrane as a helical span at residues T105–V126. Over D127–K144 the chain is Cytoplasmic. A helical membrane pass occupies residues R145–L165. At P166 to I188 the chain is on the extracellular side. Residues S189–I216 traverse the membrane as a helical segment. Topologically, residues K217–K232 are cytoplasmic. A helical transmembrane segment spans residues I233–E260. At Y261–A276 the chain is on the extracellular side. The helical transmembrane segment at I277 to L294 threads the bilayer. Residues K295–L343 are Cytoplasmic-facing.

The protein belongs to the G-protein coupled receptor 1 family.

It localises to the cell membrane. In terms of biological role, receptor for the C-X-C chemokine CXCL16. Used as a coreceptor by SIVs and by strains of HIV-2 and m-tropic HIV-1. This chain is C-X-C chemokine receptor type 6 (CXCR6), found in Cercocebus atys (Sooty mangabey).